Reading from the N-terminus, the 479-residue chain is MRVLFVASEASPFIKTGGLGDVAGALPKALAQKNADVRVVIPKYKEISWEVRDKLRFVKWFNVKVGWREQFCGVWECFHNGVTYYVLDNEAYFKRDEVYGFYDDAERFAFFDRAVLDMLRQIDWQPDLIHCNDWQTGMLPVLLKFEYKRNDMFYWKMKCVYSIHNIAFQGVFDPQILPELFGFDMELYNNTCLKFDDGVSYMKGGLCYSDVITTVSNTYAYEIQTPEYGQRLDGVLRERSYALRGITNGIDYDEFNPKTDKFIKKNYSINSIEDKAINKTELQKELGLTVDKNIPMLAMVTRLTSQKGMDLLVNISDKLLQENVQLVILGTGDKHYEEHFKWLDSRYGNKVSANIKFDNGLANKIYAACDMFLMPSLFEPCGLGQLIALRYGSIPIVRETGGLKDTITAYNEYTGEGNGFSFRNYNSDELYNIIEYALWIYKDKGKWENLIENAMNSDNSWNRSAQIYLDLYRELTGQD.

Lys-15 is an ADP-alpha-D-glucose binding site.

This sequence belongs to the glycosyltransferase 1 family. Bacterial/plant glycogen synthase subfamily.

It carries out the reaction [(1-&gt;4)-alpha-D-glucosyl](n) + ADP-alpha-D-glucose = [(1-&gt;4)-alpha-D-glucosyl](n+1) + ADP + H(+). The protein operates within glycan biosynthesis; glycogen biosynthesis. Synthesizes alpha-1,4-glucan chains using ADP-glucose. The polypeptide is Glycogen synthase (Clostridium beijerinckii (strain ATCC 51743 / NCIMB 8052) (Clostridium acetobutylicum)).